The sequence spans 214 residues: Octanoyltransferase (214 aa).

In terms of domain architecture, BPL/LPL catalytic spans 32-207; the sequence is EDTLDEIWLV…NLLALLNHPP (176 aa). Substrate contacts are provided by residues 71 to 78, 138 to 140, and 151 to 153; these read RGGQVTYH, SLG, and GLA. The Acyl-thioester intermediate role is filled by Cys-169.

Belongs to the LipB family.

The protein resides in the cytoplasm. The enzyme catalyses octanoyl-[ACP] + L-lysyl-[protein] = N(6)-octanoyl-L-lysyl-[protein] + holo-[ACP] + H(+). It functions in the pathway protein modification; protein lipoylation via endogenous pathway; protein N(6)-(lipoyl)lysine from octanoyl-[acyl-carrier-protein]: step 1/2. Functionally, catalyzes the transfer of endogenously produced octanoic acid from octanoyl-acyl-carrier-protein onto the lipoyl domains of lipoate-dependent enzymes. Lipoyl-ACP can also act as a substrate although octanoyl-ACP is likely to be the physiological substrate. The chain is Octanoyltransferase from Klebsiella pneumoniae (strain 342).